The following is a 353-amino-acid chain: WAT1-related protein At3g28100 (353 aa).

A run of 10 helical transmembrane segments spans residues 12-32, 43-63, 81-101, 105-125, 137-157, 187-207, 219-239, 252-272, 283-303, and 308-328; these read AVFL…STLF, YAFL…SLFF, IGLL…GIEY, TLAS…AIIF, SVAK…VVLY, WLIG…SFIL, FTVS…IGLV, FDIT…YYVI, LYLA…SAVF, and LYLG…AVMW. Positions 27-155 constitute an EamA domain; it reads GISTLFKVAT…LSLIGALVVV (129 aa).

Belongs to the drug/metabolite transporter (DMT) superfamily. Plant drug/metabolite exporter (P-DME) (TC 2.A.7.4) family.

The protein resides in the membrane. The sequence is that of WAT1-related protein At3g28100 from Arabidopsis thaliana (Mouse-ear cress).